Here is a 95-residue protein sequence, read N- to C-terminus: Cell division topological specificity factor (95 aa).

Belongs to the MinE family.

Its function is as follows. Prevents the cell division inhibition by proteins MinC and MinD at internal division sites while permitting inhibition at polar sites. This ensures cell division at the proper site by restricting the formation of a division septum at the midpoint of the long axis of the cell. This is Cell division topological specificity factor from Microcystis aeruginosa (strain NIES-843 / IAM M-2473).